Reading from the N-terminus, the 141-residue chain is Large ribosomal subunit protein uL16c (141 aa).

The segment covering 1–17 (MLSPKRTKYRKPHRGNR) has biased composition (basic residues). Positions 1–21 (MLSPKRTKYRKPHRGNRKGQA) are disordered.

Belongs to the universal ribosomal protein uL16 family. In terms of assembly, part of the 50S ribosomal subunit.

It localises to the plastid. The protein resides in the chloroplast. The protein is Large ribosomal subunit protein uL16c of Ostreococcus tauri.